Consider the following 328-residue polypeptide: MSKKPVRVAVTGAAGQIGYALLFRIASGEMLGKDQPVILQLLEIPDEKAQNALKGVIMELEDCAFPLLAGIEAHSDPMTAFKDTDYALLVGARPRGPGMERADLLAANAQIFTAQGKALNAVASRNVKVLVVGNPANTNAYIAMKSAPDLPAKNFTAMLRLDHNRAASQLAAKGGFKVGDIKKLTVWGNHSPTMYADYRFATVDGKSVKDAINDQAWNKDVFLPTVGKRGAAIIAARGLSSAASAANAAIDHMRDWALGSKGEWVTMGVPSNGEYGIPAGIVFGFPVTTENGEYKIVEGLAIDAFSQECIDKTLAELQGEQDGVKHLL.

12 to 18 (GAAGQIG) provides a ligand contact to NAD(+). The substrate site is built by Arg95 and Arg101. Residues Asn108, Gln115, and 132–134 (VGN) contribute to the NAD(+) site. The substrate site is built by Asn134 and Arg165. His190 functions as the Proton acceptor in the catalytic mechanism.

The protein belongs to the LDH/MDH superfamily. MDH type 2 family.

The catalysed reaction is (S)-malate + NAD(+) = oxaloacetate + NADH + H(+). Functionally, catalyzes the reversible oxidation of malate to oxaloacetate. The protein is Malate dehydrogenase of Acidovorax ebreus (strain TPSY) (Diaphorobacter sp. (strain TPSY)).